A 36-amino-acid chain; its full sequence is Asteropin-A (36 aa).

Disulfide bonds link C2–C18, C9–C25, and C17–C35.

Sialidase inhibitor. Competitively inhibits bacterial sialidases, but not viral sialidases. Does not inhibit glycosidases or proteases. Has no antitumor activity. In Asteropus simplex (Marine sponge), this protein is Asteropin-A.